Here is a 493-residue protein sequence, read N- to C-terminus: Flagellin (493 aa).

Belongs to the bacterial flagellin family.

Its subcellular location is the secreted. It localises to the bacterial flagellum. Functionally, flagellin is the subunit protein which polymerizes to form the filaments of bacterial flagella. In Salmonella rubislaw, this protein is Flagellin (fliC).